A 212-amino-acid polypeptide reads, in one-letter code: Ubiquitin-like protein MDY2 (212 aa).

Residues 74-152 (VHLTLKKIQA…TITVMIKPNP (79 aa)) form the Ubiquitin-like domain. The segment at 150 to 177 (PNPTISKEPEAEKSTNSPAPAPPQELTV) is disordered.

As to quaternary structure, interacts with GET4.

It localises to the cytoplasm. It is found in the cytosol. The protein resides in the nucleus. Its function is as follows. Required for efficient mating. Involved in the production of alpha-factor, the KAR9 and TUB1 location to the shmoo tip and nuclear migration into pheromone-induced shmoos. The chain is Ubiquitin-like protein MDY2 (MDY2) from Saccharomyces cerevisiae (strain ATCC 204508 / S288c) (Baker's yeast).